Reading from the N-terminus, the 163-residue chain is MTREIKVGIGDYAVGKGEGIISTYGLGSCVGITLYDRVTKVGGLLHALLPEAARYGHRGNPAKYVDTGLQLLLKEVLKLGASKFRLEAKLFGGAQMFQNIKSDELKIGERNVQTAKRELKKLGIRLVAEDTGGRGGRTIYLDLSTGKVRMRKVIGGQVIEKVY.

The protein belongs to the CheD family.

The catalysed reaction is L-glutaminyl-[protein] + H2O = L-glutamyl-[protein] + NH4(+). Its function is as follows. Probably deamidates glutamine residues to glutamate on methyl-accepting chemotaxis receptors (MCPs), playing an important role in chemotaxis. This chain is Probable chemoreceptor glutamine deamidase CheD, found in Pyrococcus abyssi (strain GE5 / Orsay).